Here is a 412-residue protein sequence, read N- to C-terminus: Phosphoglycerate kinase (412 aa).

Substrate is bound by residues 26 to 28, Arg42, 65 to 68, Arg133, and Arg166; these read DFN and HLGR. Residues Lys217, Gly308, Glu339, and 368 to 371 each bind ATP; that span reads GGDS.

Belongs to the phosphoglycerate kinase family. Monomer.

It is found in the cytoplasm. The enzyme catalyses (2R)-3-phosphoglycerate + ATP = (2R)-3-phospho-glyceroyl phosphate + ADP. It participates in carbohydrate degradation; glycolysis; pyruvate from D-glyceraldehyde 3-phosphate: step 2/5. In Synechococcus sp. (strain JA-2-3B'a(2-13)) (Cyanobacteria bacterium Yellowstone B-Prime), this protein is Phosphoglycerate kinase.